The chain runs to 478 residues: Monocarboxylate transporter 2 (478 aa).

Topologically, residues 1–15 (MPPMPSAPPVHPPPD) are cytoplasmic. The chain crosses the membrane as a helical span at residues 16-36 (GGWGWIVVGAAFISIGFSYAF). Over 37–59 (PKAVTVFFKEIQQIFHTTYSEIA) the chain is Extracellular. Residues 60-80 (WISSIMLAVMYAGGPVSSVLV) traverse the membrane as a helical segment. Residues 81-89 (NKYGSRPVV) lie on the Cytoplasmic side of the membrane. A helical membrane pass occupies residues 90–110 (IAGGLLCCLGMVLASFSSSVV). The Extracellular portion of the chain corresponds to 111 to 115 (QLYLT). A helical membrane pass occupies residues 116 to 136 (MGFITGLGLAFNLQPALTIIG). At 137 to 148 (KYFYRKRPMANG) the chain is on the cytoplasmic side. A helical transmembrane segment spans residues 149-169 (LAMAGSPVFLSSLAPFNQYLF). The Extracellular portion of the chain corresponds to 170-173 (NTFG). Residues 174–194 (WKGSFLILGSLLLNACVAGSL) traverse the membrane as a helical segment. At 195–246 (MRPLGPNQTTSKSKNKTGKTEDDSSPKKIKTKKSTWEKVNKYLDFSLFKHRG) the chain is on the cytoplasmic side. Positions 200–224 (PNQTTSKSKNKTGKTEDDSSPKKIK) are disordered. Residues 247–267 (FLIYLSGNVIMFLGFFAPIIF) traverse the membrane as a helical segment. The Extracellular portion of the chain corresponds to 268–282 (LAPYAKDQGIDEYSA). Residues 283-303 (AFLLSVMAFVDMFARPSVGLI) traverse the membrane as a helical segment. The Cytoplasmic segment spans residues 304 to 312 (ANSKYIRPR). The chain crosses the membrane as a helical span at residues 313–333 (IQYFFSFAIMFNGVCHLLCPL). Residues 334–338 (AQDYT) are Extracellular-facing. A helical transmembrane segment spans residues 339–359 (SLVLYAVFFGLGFGSVSSVLF). The Cytoplasmic segment spans residues 360 to 373 (ETLMDLVGAPRFSS). Residues 374-394 (AVGLVTIVECGPVLLGPPLAG) form a helical membrane-spanning segment. The Extracellular segment spans residues 395–406 (KLVDLTGEYKYM). Residues 407–427 (YMSCGAIVVAASVWLLIGNAI) traverse the membrane as a helical segment. Topologically, residues 428-478 (NYRLLAKERKEENARQKTRESEPLSKSKHSEDVNVKVSNAQSVTSERETNI) are cytoplasmic. Basic and acidic residues predominate over residues 437–461 (KEENARQKTRESEPLSKSKHSEDVN). A disordered region spans residues 437-478 (KEENARQKTRESEPLSKSKHSEDVNVKVSNAQSVTSERETNI).

Belongs to the major facilitator superfamily. Monocarboxylate porter (TC 2.A.1.13) family. In terms of assembly, homodimer. Interacts with GRID2IP. Interacts with EMB; interaction mediates SLC16A7 targeting to the plasma membrane. Interacts with isoform 2 of BSG. As to expression, detected in heart and in blood lymphocytes and monocytes (at protein level). High expression in testis, moderate to low in spleen, heart, kidney, pancreas, skeletal muscle, brain and leukocyte. Restricted expression in normal tissues, but widely expressed in cancer cells.

The protein resides in the cell membrane. The protein localises to the basolateral cell membrane. Its subcellular location is the cytoplasm. The enzyme catalyses pyruvate(out) + H(+)(out) = pyruvate(in) + H(+)(in). It carries out the reaction 3-methyl-2-oxobutanoate(out) + H(+)(out) = 3-methyl-2-oxobutanoate(in) + H(+)(in). It catalyses the reaction (S)-lactate(in) + H(+)(in) = (S)-lactate(out) + H(+)(out). The catalysed reaction is acetoacetate(out) + H(+)(out) = acetoacetate(in) + H(+)(in). The enzyme catalyses (R)-3-hydroxybutanoate(out) + H(+)(out) = (R)-3-hydroxybutanoate(in) + H(+)(in). It carries out the reaction 4-methyl-2-oxopentanoate(out) + H(+)(out) = 4-methyl-2-oxopentanoate(in) + H(+)(in). It catalyses the reaction (S)-3-hydroxybutanoate(out) + H(+)(out) = (S)-3-hydroxybutanoate(in) + H(+)(in). Its activity is regulated as follows. Transport activity exhibits steep dependence on substrate concentration. Substrate concentration sensitivity of SLC16A7 arises from the strong inter-subunit cooperativity of the SLC16A7 dimer during transport. Inhibited by AR-C155858. Functionally, proton-coupled monocarboxylate symporter. Catalyzes the rapid transport across the plasma membrane of monocarboxylates such as L-lactate, pyruvate and ketone bodies, acetoacetate, beta-hydroxybutyrate and acetate. Dimerization is functionally required and both subunits work cooperatively in transporting substrate. The polypeptide is Monocarboxylate transporter 2 (Homo sapiens (Human)).